We begin with the raw amino-acid sequence, 305 residues long: Dermonecrotic toxin LiSicTox-alphaIA2aiii (305 aa).

Residues leucine 1–alanine 17 form the signal peptide. Positions alanine 18 to arginine 25 are excised as a propeptide. Histidine 37 is a catalytic residue. Positions 57 and 59 each coordinate Mg(2+). Histidine 73 acts as the Nucleophile in catalysis. 2 cysteine pairs are disulfide-bonded: cysteine 77-cysteine 83 and cysteine 79-cysteine 222. Residue aspartate 117 coordinates Mg(2+). N-linked (GlcNAc...) asparagine glycosylation is present at asparagine 282.

Belongs to the arthropod phospholipase D family. Class II subfamily. It depends on Mg(2+) as a cofactor. As to expression, expressed by the venom gland.

The protein resides in the secreted. It carries out the reaction an N-(acyl)-sphingosylphosphocholine = an N-(acyl)-sphingosyl-1,3-cyclic phosphate + choline. The enzyme catalyses an N-(acyl)-sphingosylphosphoethanolamine = an N-(acyl)-sphingosyl-1,3-cyclic phosphate + ethanolamine. The catalysed reaction is a 1-acyl-sn-glycero-3-phosphocholine = a 1-acyl-sn-glycero-2,3-cyclic phosphate + choline. It catalyses the reaction a 1-acyl-sn-glycero-3-phosphoethanolamine = a 1-acyl-sn-glycero-2,3-cyclic phosphate + ethanolamine. Its function is as follows. Dermonecrotic toxins cleave the phosphodiester linkage between the phosphate and headgroup of certain phospholipids (sphingolipid and lysolipid substrates), forming an alcohol (often choline) and a cyclic phosphate. This toxin acts on sphingomyelin (SM). It may also act on ceramide phosphoethanolamine (CPE), lysophosphatidylcholine (LPC) and lysophosphatidylethanolamine (LPE), but not on lysophosphatidylserine (LPS), and lysophosphatidylglycerol (LPG). It acts by transphosphatidylation, releasing exclusively cyclic phosphate products as second products. Induces dermonecrosis, hemolysis, increased vascular permeability, edema, inflammatory response, and platelet aggregation. The sequence is that of Dermonecrotic toxin LiSicTox-alphaIA2aiii from Loxosceles intermedia (Brown spider).